A 298-amino-acid chain; its full sequence is 1,2-dihydroxynaphthalene dioxygenase (298 aa).

VOC domains follow at residues 6 to 121 (ELGY…IFYG) and 146 to 267 (GIGH…FGWG). Histidine 149 is a Fe cation binding site. Residues histidine 149, 196–197 (QH), histidine 212, and tyrosine 253 each bind substrate. Histidine 212 is a binding site for Fe cation. Residue glutamate 263 coordinates Fe cation.

The protein belongs to the extradiol ring-cleavage dioxygenase family. As to quaternary structure, homooctamer. It depends on Fe(2+) as a cofactor.

It catalyses the reaction naphthalene-1,2-diol + O2 = 2-hydroxychromene-2-carboxylate + H(+). It participates in aromatic compound metabolism; naphthalene degradation. Functionally, involved in the naphthalene and naphthalenesulfonate catabolic pathway. Catalyzes the meta-cleavage of 1,2-dihydroxynaphthalene (1,2-DHN) to yield 2-hydroxychromene-2-carboxylic acid. Can also cleave 1,2,5-trihydroxynaphthalene (1,2,5-THN), 1,2,6-trihydroxynaphthalene (1,2,6-THN), 1,2,7-trihydroxynaphthalene (1,2,7-THN), 2,3-dihydroxybiphenyl, 3,4-dihydroxybiphenyl, catechol, 3-methylcatechol and 4-methylcatechol. This chain is 1,2-dihydroxynaphthalene dioxygenase (nsaC), found in Sphingobium xenophagum.